The chain runs to 310 residues: Carbamate kinase (310 aa).

The protein belongs to the carbamate kinase family.

Its subcellular location is the cytoplasm. The catalysed reaction is hydrogencarbonate + NH4(+) + ATP = carbamoyl phosphate + ADP + H2O + H(+). Its pathway is metabolic intermediate metabolism; carbamoyl phosphate degradation; CO(2) and NH(3) from carbamoyl phosphate: step 1/1. This is Carbamate kinase (arcC) from Staphylococcus epidermidis (strain ATCC 35984 / DSM 28319 / BCRC 17069 / CCUG 31568 / BM 3577 / RP62A).